A 370-amino-acid polypeptide reads, in one-letter code: Gap junction delta-4 protein (370 aa).

The Cytoplasmic segment spans residues 1–19 (MEGVDLLGFLIITLNCNVT). The chain crosses the membrane as a helical span at residues 20–40 (MXGKLWFVLTMLLRMLVIVLA). The Extracellular segment spans residues 41–76 (GRPVYQDEQERFVCNTLQPGCANVCYDVFSPVSHLR). The chain crosses the membrane as a helical span at residues 77-97 (FWLIQGVCVLLPSAVFSVYVL). Over 98-146 (HRGATLAALGPRRCPEPRDTASGQRRCPGSCRERGGLEVPDFSAGYIIH) the chain is Cytoplasmic. Residues 147 to 167 (LLLRTLLEAAFGALNYLLFGF) form a helical membrane-spanning segment. The Extracellular segment spans residues 168–196 (LAPNKFPCTRPPCTGVVDCYVSRPTEKSL). A helical transmembrane segment spans residues 197–217 (LMLFLWAVSALSFLLGLADLV). The Cytoplasmic portion of the chain corresponds to 218–370 (CSLRRLMRRR…HLRARKSEWV (153 aa)). The tract at residues 227–370 (RPGPPTSPSI…HLRARKSEWV (144 aa)) is disordered. The span at 246 to 260 (PEGRPTDKEGGREQE) shows a compositional bias: basic and acidic residues. Positions 331-345 (PSAAPSHLAAHPSCS) are enriched in low complexity.

The protein belongs to the connexin family. Delta-type subfamily. A connexon is composed of a hexamer of connexins.

The protein resides in the cell membrane. Its subcellular location is the cell junction. It localises to the gap junction. In terms of biological role, one gap junction consists of a cluster of closely packed pairs of transmembrane channels, the connexons, through which materials of low MW diffuse from one cell to a neighboring cell. This is Gap junction delta-4 protein (GJD4) from Macaca fascicularis (Crab-eating macaque).